A 270-amino-acid polypeptide reads, in one-letter code: GTP cyclohydrolase FolE2 (270 aa).

This sequence belongs to the GTP cyclohydrolase IV family.

The enzyme catalyses GTP + H2O = 7,8-dihydroneopterin 3'-triphosphate + formate + H(+). Its pathway is cofactor biosynthesis; 7,8-dihydroneopterin triphosphate biosynthesis; 7,8-dihydroneopterin triphosphate from GTP: step 1/1. In terms of biological role, converts GTP to 7,8-dihydroneopterin triphosphate. This Cupriavidus pinatubonensis (strain JMP 134 / LMG 1197) (Cupriavidus necator (strain JMP 134)) protein is GTP cyclohydrolase FolE2.